Reading from the N-terminus, the 440-residue chain is RNA polymerase II C-terminal domain phosphatase-like 4 (440 aa).

Over residues 1-36 (MSVASDSPVHSSSSSDDLAAFLDAELDSASDASSGP) the composition is skewed to low complexity. The tract at residues 1 to 49 (MSVASDSPVHSSSSSDDLAAFLDAELDSASDASSGPSEEEEAEDDVESG) is disordered. Residues 37-47 (SEEEEAEDDVE) show a composition bias toward acidic residues. Positions 118–292 (QRQRKLYLVL…DHRYKSLSEL (175 aa)) constitute an FCP1 homology domain. The BRCT domain maps to 337–429 (VRKEILKGCK…MKQPEENFGL (93 aa)).

Interacts with RAP74. The cofactor is Mg(2+). Requires Co(2+) as cofactor. It depends on Mn(2+) as a cofactor.

It localises to the nucleus. It catalyses the reaction O-phospho-L-seryl-[protein] + H2O = L-seryl-[protein] + phosphate. The catalysed reaction is O-phospho-L-threonyl-[protein] + H2O = L-threonyl-[protein] + phosphate. Its function is as follows. Processively dephosphorylates 'Ser-2' and/or 'Ser-5' of the heptad repeats YSPTSPS in the C-terminal domain of the largest RNA polymerase II subunit (RPB1). This promotes the activity of RNA polymerase II. Required for normal plant growth. The chain is RNA polymerase II C-terminal domain phosphatase-like 4 (CPL4) from Arabidopsis thaliana (Mouse-ear cress).